Reading from the N-terminus, the 291-residue chain is 33 kDa chaperonin (291 aa).

Disulfide bonds link cysteine 235-cysteine 237 and cysteine 268-cysteine 271.

This sequence belongs to the HSP33 family. In terms of processing, under oxidizing conditions two disulfide bonds are formed involving the reactive cysteines. Under reducing conditions zinc is bound to the reactive cysteines and the protein is inactive.

It localises to the cytoplasm. Functionally, redox regulated molecular chaperone. Protects both thermally unfolding and oxidatively damaged proteins from irreversible aggregation. Plays an important role in the bacterial defense system toward oxidative stress. The chain is 33 kDa chaperonin from Streptococcus agalactiae serotype III (strain NEM316).